Here is a 452-residue protein sequence, read N- to C-terminus: uncharacterized protein (452 aa).

This is an uncharacterized protein from Chlamydia pneumoniae (Chlamydophila pneumoniae).